Here is a 143-residue protein sequence, read N- to C-terminus: UPF0763 protein HH_0976 (143 aa).

It belongs to the UPF0763 family.

The sequence is that of UPF0763 protein HH_0976 from Helicobacter hepaticus (strain ATCC 51449 / 3B1).